The following is a 469-amino-acid chain: 3-isopropylmalate dehydratase large subunit (469 aa).

[4Fe-4S] cluster contacts are provided by cysteine 347, cysteine 407, and cysteine 410.

This sequence belongs to the aconitase/IPM isomerase family. LeuC type 1 subfamily. In terms of assembly, heterodimer of LeuC and LeuD. It depends on [4Fe-4S] cluster as a cofactor.

The catalysed reaction is (2R,3S)-3-isopropylmalate = (2S)-2-isopropylmalate. It participates in amino-acid biosynthesis; L-leucine biosynthesis; L-leucine from 3-methyl-2-oxobutanoate: step 2/4. Its function is as follows. Catalyzes the isomerization between 2-isopropylmalate and 3-isopropylmalate, via the formation of 2-isopropylmaleate. In Synechococcus sp. (strain RCC307), this protein is 3-isopropylmalate dehydratase large subunit.